We begin with the raw amino-acid sequence, 751 residues long: Cytosolic neutral trehalase (751 aa).

A compositionally biased stretch (polar residues) spans 1–10 (MSQVNTSQGP). The segment at 1–59 (MSQVNTSQGPVAQGRQRRLSSLSEFNDPFSNAEVYYGPPTDPRKQKQAKPAKINRTRTM) is disordered. S2 is subject to N-acetylserine. A phosphoserine; by PKA mark is found at S20 and S21. Position 23 is a phosphoserine (S23). Residues 45-55 (QKQAKPAKINR) are compositionally biased toward basic residues. Position 58 is a phosphothreonine (T58). A Phosphoserine; by PKA modification is found at S60. At S66 the chain carries Phosphoserine. A disordered region spans residues 73–92 (FGKLQQTRRGSEDDTYSSSQ). The residue at position 83 (S83) is a Phosphoserine; by PKA. Ca(2+) is bound by residues D114, D116, N118, Q120, and D125. Substrate is bound by residues R302, 309–310 (WD), N346, 355–357 (RSQ), E424, R473, and G476. Active-site proton donor/acceptor residues include D478 and E674.

Belongs to the glycosyl hydrolase 37 family. In terms of assembly, monomer. Interacts with BMH1 dimers; the interaction is direct and activates NTH1. Interacts with BMH2. Ca(2+) serves as cofactor. In terms of processing, phosphorylated by protein kinase A (PKA); phosphorylation at Ser-60 and Ser-83 is required for activation by the 14-3-3 proteins BMH1 and BMH2.

The protein resides in the cytoplasm. It catalyses the reaction alpha,alpha-trehalose + H2O = alpha-D-glucose + beta-D-glucose. The protein operates within carbohydrate degradation. Activated by calcium. Activated by protein kinase A (PKA)-mediated phosphorylation. In terms of biological role, hydrolyzes intracellular trehalose to glucose. The disaccharide trehalose serves as a storage carbohydrate that is mobilized during nutrient stress. Regulates the level of trehalose as a protectant for cell integrity during heat stress. This is Cytosolic neutral trehalase from Saccharomyces cerevisiae (strain ATCC 204508 / S288c) (Baker's yeast).